An 818-amino-acid polypeptide reads, in one-letter code: LisH domain-containing protein ARMC9 (818 aa).

One can recognise a LisH domain in the interval 7-39; sequence HESELLGLVKEYLDFAEFEDTLKTFSKECKIKG. The stretch at 204–230 forms a coiled coil; it reads QSNKEILQQLHQQLVEAERRSVTYLKR. S582 carries the phosphoserine modification. Disordered regions lie at residues 642–755 and 790–818; these read VQWS…TTRE and SSCG…SHRK. Residues 701-711 show a composition bias toward low complexity; the sequence is STPESCVSSSS. Over residues 792-818 the composition is skewed to polar residues; it reads CGPQQASRPGSTASSTRGLPSSQSHRK.

As to quaternary structure, interacts with TOGARAM1, CCDC66, CEP104, CSPP1 and CEP290. Interacts with NDUFAF2. As to expression, strongly expressed in most melanomas and melanocytes. Weakly expressed in the testis.

It localises to the cytoplasm. The protein localises to the cytoskeleton. It is found in the cilium basal body. The protein resides in the cell projection. Its subcellular location is the cilium. It localises to the microtubule organizing center. The protein localises to the centrosome. It is found in the centriole. Involved in ciliogenesis. It is required for appropriate acetylation and polyglutamylation of ciliary microtubules, and regulation of cilium length. Acts as a positive regulator of hedgehog (Hh)signaling. May participate in the trafficking and/or retention of GLI2 and GLI3 proteins at the ciliary tip. The polypeptide is LisH domain-containing protein ARMC9 (Homo sapiens (Human)).